Here is a 688-residue protein sequence, read N- to C-terminus: Large T antigen (688 aa).

An N-acetylmethionine; by host modification is found at Met1. In terms of domain architecture, J spans Glu12–Gly75. An LXCXE motif motif is present at residues Leu105–Glu109. Ser114, Ser121, and Ser124 each carry phosphoserine; by host. A disordered region spans residues Asp115–Asp135. At Thr125 the chain carries Phosphothreonine; by host. A Nuclear localization signal motif is present at residues Pro126 to Val133. The segment at residues Pro140 to Glu255 is a DNA-binding region (T-ag OBD). A T-ag D1-type zinc finger spans residues Thr266–Arg358. Residues Cys303, Cys306, His314, and His318 each coordinate Zn(2+). Residues Gln401–Ser561 enclose the SF3 helicase domain. Residue Gly427–Thr434 coordinates ATP. Positions Glu632–Glu658 are disordered. Residues His642 to Glu658 are compositionally biased toward polar residues. A Phosphoserine; by host modification is found at Ser660. At Lys680 the chain carries N6-acetyllysine; by host. Thr684 carries the phosphothreonine; by host modification.

As to quaternary structure, forms homohexamers in the presence of ATP. Interacts with host HDAC1. Interacts (via LXCXE domain) with host RB1; the interaction induces the aberrant dissociation of RB1-E2F1 complex thereby disrupting RB1's activity. Interacts (via LXCXE domain) with host pRB-related proteins RBL1 and RBL2. Interacts (via C-terminus) with host TOP1 and POLA1 allowing DNA replication. Interacts with host TP53, inhibiting TP53 binding to DNA. Interacts with host preinitiation complex components TBP, TFIIA and TFIID to regulate transcription initiation. Mg(2+) is required as a cofactor. Phosphorylated on both serine and threonine residues. Small t antigen inhibits the dephosphorylation by the AC form of PP2A. In terms of processing, O-Glycosylated near the C-terminal region. Post-translationally, acetylated by CBP in a TP53-dependent manner.

The protein resides in the host nucleus. The enzyme catalyses Couples ATP hydrolysis with the unwinding of duplex DNA by translocating in the 3'-5' direction.. The catalysed reaction is ATP + H2O = ADP + phosphate + H(+). Isoform large T antigen is a key early protein essential for both driving viral replication and inducing cellular transformation. Plays a role in viral genome replication by driving entry of quiescent cells into the cell cycle and by autoregulating the synthesis of viral early mRNA. Displays highly oncogenic activities by corrupting the host cellular checkpoint mechanisms that guard cell division and the transcription, replication, and repair of DNA. Participates in the modulation of cellular gene expression preceeding viral DNA replication. This step involves binding to host key cell cycle regulators retinoblastoma protein RB1/pRb and TP53. Induces the disassembly of host E2F1 transcription factors from RB1, thus promoting transcriptional activation of E2F1-regulated S-phase genes. Inhibits host TP53 binding to DNA, abrogating the ability of TP53 to stimulate gene expression. Plays the role of a TFIID-associated factor (TAF) in transcription initiation for all three RNA polymerases, by stabilizing the TBP-TFIIA complex on promoters. Initiates viral DNA replication and unwinding via interactions with the viral origin of replication. Binds two adjacent sites in the SV40 origin. The replication fork movement is facilitated by Large T antigen helicase activity. Has processive 3'-5' DNA helicase activity which requires a short 3' single-stranded region and ATP. Activates the transcription of viral late mRNA, through host TBP and TFIIA stabilization. Interferes with histone deacetylation mediated by HDAC1, leading to activation of transcription. In JC polyomavirus (JCPyV), this protein is Large T antigen.